Consider the following 347-residue polypeptide: 3',5'-bisphosphate nucleotidase 2 (347 aa).

Residue Asp46 is the Proton acceptor of the active site. Positions 71, 134, 136, and 137 each coordinate Mg(2+). Residue Thr139 is the Proton acceptor of the active site. Residues Thr139, Ser255, Lys258, Arg272, and Asp284 each contribute to the adenosine 3',5'-bisphosphate site. AMP is bound by residues Ser255, Lys258, Arg272, and Asp284. Asp284 is a Mg(2+) binding site.

Belongs to the inositol monophosphatase superfamily. It depends on Mg(2+) as a cofactor. In terms of tissue distribution, very low expression in roots, leaves, stems, flowers and siliques.

It carries out the reaction adenosine 3',5'-bisphosphate + H2O = AMP + phosphate. It catalyses the reaction 3'-phosphoadenylyl sulfate + H2O = adenosine 5'-phosphosulfate + phosphate. The catalysed reaction is 1D-myo-inositol 1,4-bisphosphate + H2O = 1D-myo-inositol 4-phosphate + phosphate. The protein operates within signal transduction; phosphatidylinositol signaling pathway. With respect to regulation, inhibited by Li(+) (IC(50)=10 mM), Na(+) (IC(50)=200 mM) and Ca(2+) (IC(50)=0.03 mM). Functionally, phosphatase that converts adenosine 3'-phosphate 5'-phosphosulfate (PAPS) to adenosine 5'-phosphosulfate (APS) and 3'-phosphoadenosine 5'-phosphate (3'-PAP) to AMP. May regulate the flux of sulfur in the sulfur-activation pathway by converting PAPS to APS. Prevents both the toxicity of PAP on RNA processing enzymes as well as the product inhibition by PAP of sulfate conjugation. Is also able to hydrolyze inositol 1,4-bisphosphate. This Arabidopsis thaliana (Mouse-ear cress) protein is 3',5'-bisphosphate nucleotidase 2.